Here is a 524-residue protein sequence, read N- to C-terminus: Phosphoenolpyruvate carboxykinase (ATP) (524 aa).

Positions 52, 188, and 194 each coordinate substrate. ATP-binding positions include Lys-194, His-213, and 229-237 (GLSGTGKTT). Residues Lys-194 and His-213 each coordinate Mn(2+). Asp-250 contacts Mn(2+). ATP is bound by residues Glu-278, Arg-314, and Thr-439. Arg-314 serves as a coordination point for substrate.

This sequence belongs to the phosphoenolpyruvate carboxykinase (ATP) family. Mn(2+) is required as a cofactor.

It is found in the cytoplasm. The catalysed reaction is oxaloacetate + ATP = phosphoenolpyruvate + ADP + CO2. It functions in the pathway carbohydrate biosynthesis; gluconeogenesis. Its function is as follows. Involved in the gluconeogenesis. Catalyzes the conversion of oxaloacetate (OAA) to phosphoenolpyruvate (PEP) through direct phosphoryl transfer between the nucleoside triphosphate and OAA. The polypeptide is Phosphoenolpyruvate carboxykinase (ATP) (Campylobacter lari (strain RM2100 / D67 / ATCC BAA-1060)).